A 1011-amino-acid polypeptide reads, in one-letter code: Vacuolar membrane protease (1011 aa).

The Cytoplasmic portion of the chain corresponds to 1-14; it reads MKLTKAVFRFRRTN. A helical transmembrane segment spans residues 15–35; that stretch reads LSTLLVITYLVITTLYVWDHF. The Vacuolar portion of the chain corresponds to 36–352; it reads RYHFTLPSDY…WFVVWSARSL (317 aa). Residues His-149, Asp-161, Glu-194, Glu-219, and His-293 each contribute to the Zn(2+) site. The helical transmembrane segment at 353–373 threads the bilayer; it reads FYWNCIILALFPSILAILFLV. Over 374 to 390 the chain is Cytoplasmic; sequence AYDMQLLKFNFWDAMLR. The helical transmembrane segment at 391–411 threads the bilayer; the sequence is LPVSVCLAYFCVKLFQVLVGQ. The Vacuolar portion of the chain corresponds to 412–420; the sequence is LNPYVFSRD. Residues 421–441 form a helical membrane-spanning segment; sequence YVSPILAEASMFIFMNYVILS. Topologically, residues 442–451 are cytoplasmic; sequence SWERLRPLRD. The chain crosses the membrane as a helical span at residues 452–472; sequence FKTVALVEVSMVLWIYLISVT. Residues 473 to 487 are Vacuolar-facing; it reads RWLRDSDYTATGLYP. Residues 488–508 form a helical membrane-spanning segment; it reads FTIGYTFVSIGAIIGVFCATF. The Cytoplasmic segment spans residues 509 to 647; sequence KAKLNPEDDS…SILNYDWSIQ (139 aa). The disordered stretch occupies residues 534–585; that stretch reads MQHQYQQHSQKHSNQHSPHHSTHHSAQHSVHHSPRQSIHQVPSSEQRQRDAS. Residues 542–567 show a composition bias toward basic residues; the sequence is SQKHSNQHSPHHSTHHSAQHSVHHSP. A compositionally biased stretch (polar residues) spans 568–578; that stretch reads RQSIHQVPSSE. A helical membrane pass occupies residues 648–668; the sequence is FMVVTPWVTYFTWICLDLIMG. Residues 669–681 lie on the Vacuolar side of the membrane; the sequence is AMNQTIQESAKGT. Residue Asn-671 is glycosylated (N-linked (GlcNAc...) asparagine). Residues 682–702 form a helical membrane-spanning segment; that stretch reads TFVTHMALIGSLLLSLPMLPF. Residues 703 to 708 lie on the Cytoplasmic side of the membrane; it reads TYKLHS. The chain crosses the membrane as a helical span at residues 709–729; that stretch reads FAGMLFLLLAVTTAVWTIVAP. The Vacuolar portion of the chain corresponds to 730 to 1011; that stretch reads PFTESSPLKL…MVSVTKYVEL (282 aa). N-linked (GlcNAc...) asparagine glycosylation is found at Asn-751, Asn-825, and Asn-854.

The protein belongs to the peptidase M28 family. It depends on Zn(2+) as a cofactor.

It is found in the vacuole membrane. Its function is as follows. May be involved in vacuolar sorting and osmoregulation. The protein is Vacuolar membrane protease of Eremothecium gossypii (strain ATCC 10895 / CBS 109.51 / FGSC 9923 / NRRL Y-1056) (Yeast).